We begin with the raw amino-acid sequence, 445 residues long: Trigger factor (445 aa).

The PPIase FKBP-type domain occupies 162–247 (GDQVTIDAIG…IKAVHTAEPT (86 aa)).

This sequence belongs to the FKBP-type PPIase family. Tig subfamily.

It localises to the cytoplasm. The enzyme catalyses [protein]-peptidylproline (omega=180) = [protein]-peptidylproline (omega=0). In terms of biological role, involved in protein export. Acts as a chaperone by maintaining the newly synthesized protein in an open conformation. Functions as a peptidyl-prolyl cis-trans isomerase. The sequence is that of Trigger factor from Rickettsia massiliae (strain Mtu5).